Consider the following 401-residue polypeptide: Nicotinate phosphoribosyltransferase (401 aa).

Phosphohistidine; by autocatalysis is present on histidine 221.

The protein belongs to the NAPRTase family. Transiently phosphorylated on a His residue during the reaction cycle. Phosphorylation strongly increases the affinity for substrates and increases the rate of nicotinate D-ribonucleotide production. Dephosphorylation regenerates the low-affinity form of the enzyme, leading to product release.

The enzyme catalyses nicotinate + 5-phospho-alpha-D-ribose 1-diphosphate + ATP + H2O = nicotinate beta-D-ribonucleotide + ADP + phosphate + diphosphate. It functions in the pathway cofactor biosynthesis; NAD(+) biosynthesis; nicotinate D-ribonucleotide from nicotinate: step 1/1. Functionally, catalyzes the synthesis of beta-nicotinate D-ribonucleotide from nicotinate and 5-phospho-D-ribose 1-phosphate at the expense of ATP. In Pectobacterium atrosepticum (strain SCRI 1043 / ATCC BAA-672) (Erwinia carotovora subsp. atroseptica), this protein is Nicotinate phosphoribosyltransferase.